Consider the following 897-residue polypeptide: Protein transport protein SEC24-1 (897 aa).

Zn(2+) is bound by residues Cys-213, Cys-216, Cys-235, and Cys-238. The tract at residues 213-238 (CRRCRSYINPFAKFIEQGRRWRCNFC) is zinc finger-like.

This sequence belongs to the SEC23/SEC24 family. SEC24 subfamily. As to quaternary structure, the COPII coat is composed of at least 5 proteins: the SEC23/24 complex, the SEC13/31 complex, and the protein SAR1. Golgi apparatus membrane; Peripheral membrane protein; Cytoplasmic side.

It localises to the cytoplasm. The protein localises to the cytoplasmic vesicle. Its subcellular location is the COPII-coated vesicle membrane. The protein resides in the endoplasmic reticulum membrane. It is found in the golgi apparatus membrane. Functionally, component of the coat protein complex II (COPII) which promotes the formation of transport vesicles from the endoplasmic reticulum (ER). The coat has two main functions, the physical deformation of the endoplasmic reticulum membrane into vesicles and the selection of cargo molecules. The sequence is that of Protein transport protein SEC24-1 (SEC241) from Candida glabrata (strain ATCC 2001 / BCRC 20586 / JCM 3761 / NBRC 0622 / NRRL Y-65 / CBS 138) (Yeast).